The primary structure comprises 345 residues: Protein GAMETE CELL DEFECTIVE 1, mitochondrial (345 aa).

A mitochondrion-targeting transit peptide spans 1 to 43; sequence MLALRKTLLHGRLPAAPPAAAAAAIASRIPALLRRLSSSPGDG. Positions 36 to 82 are disordered; sequence LSSSPGDGQGGDEWGSSWSTGITKEHFDGSDAAVGRPVTSPSKPVSP.

The protein localises to the mitochondrion. Essential for fertility (male and female gametophyte functions and development). Required for the integrity of female gametic mitochondria. Involved in embryo apical-basal patterning, and particularly dorsal-ventral patterning, during early embryogenesis, and endosperm free nucleus positioning and development as well as early endosperm development, probably by modulating the expression pattern of related genes (e.g. AL1, MYB3/AL2, CYP78A13/GE, PNH1, HAZ1, MPK6 and OSH1). Has function in triggering of endosperm programmed cell death (PCD) leading to syncytial endosperm cellularization and starchy endosperm cell maturation. Implicated in central vacuole dynamics necessary for microspore development leading to pollen production, and for pollen development and germination. This chain is Protein GAMETE CELL DEFECTIVE 1, mitochondrial, found in Oryza sativa subsp. indica (Rice).